Reading from the N-terminus, the 319-residue chain is MATH domain and coiled-coil domain-containing protein At3g58200 (319 aa).

The 127-residue stretch at D6–V132 folds into the MATH domain. Residues F255–K302 are a coiled coil.

In Arabidopsis thaliana (Mouse-ear cress), this protein is MATH domain and coiled-coil domain-containing protein At3g58200.